The following is a 606-amino-acid chain: MKLLGNSKYFFVVLLLCISVFLNGQEILDEIKYSEEVCNEQIDLHILLDGSGSIGHSNWISHVIPMLTTLVDNLNISRDEINISMTLFSTYARELVRLKRYGSTSKASLRFIIAQLQNNYSPHGTTNLTSALLNVDNLIQKKMNRPNAIQLVIILTDGIPNNLKKSTTVVNQLKKKDVNVAIIGVGAGVNNMFNRILVGCGKLGPCPYYSYGSWDQAQTMIKPFLSKVCQEVEKVALCGKWEEWSECSTTCDNGTKIRKRKVLHPNCAGEMTAPCKVRDCPPKPVAPPVIPIKVPDVPVKPVEPIEPAEPAEPAEPAEPAEPAEPAEPAEPAEPAEPAEPAEPAEPAEPAEPAEPAEPAEPAEPAKPAEPAEPAEPAEPAEPVNPDNPILPIKPEEPSGGAEPLNPEVENPFIIPDEPIEPIIAPGAVPDKPIIPEESNELPNNLPESPSDSQVEYPRPNDNGDNSNNTINSNKNIPNKHVPPTDDNPYKGQEERIPKPHRSNDEYIYYNNANNNDKLEPEIPSKDYEENKSKKQSKSNNGYKIAGGIIGGLAIIGCIGVGYNFIAGSSAAAMAGEAAPFEDVMADDEKGIVENEQFKLPEDNDWN.

The signal sequence occupies residues 1-24 (MKLLGNSKYFFVVLLLCISVFLNG). Residues 43–228 (DLHILLDGSG…TMIKPFLSKV (186 aa)) enclose the VWFA domain. The 47-residue stretch at 235–281 (VALCGKWEEWSECSTTCDNGTKIRKRKVLHPNCAGEMTAPCKVRDCP) folds into the TSP type-1 domain. The disordered stretch occupies residues 301 to 541 (PVEPIEPAEP…SKKQSKSNNG (241 aa)). 3 stretches are compositionally biased toward low complexity: residues 409–425 (ENPFIIPDEPIEPIIAP), 440–450 (ELPNNLPESPS), and 459–479 (PNDNGDNSNNTINSNKNIPNK). 2 stretches are compositionally biased toward basic and acidic residues: residues 487–504 (NPYKGQEERIPKPHRSND) and 516–532 (DKLEPEIPSKDYEENKS). A helical transmembrane segment spans residues 544–564 (IAGGIIGGLAIIGCIGVGYNF).

Interacts (via integrin-like A-domain) with Anopheles gambiae saglin/SG1F; the interaction probably promotes sporozoite invasion of salivary gland. Interacts (via integrin-like A-domain) with human AHSG; the interaction promotes sporozoite invasion of hepatocytes and formation of exoerythrocytic forms of parasites in human hepatoma HepG2 cells.

It localises to the cell membrane. Its subcellular location is the cytoplasm. Functionally, promotes parasite ability to invade host hepatocytes. Promotes parasite ability to invade mosquito salivary glands. Required for sporozoite gliding motility. This Plasmodium berghei (strain Anka) protein is Thrombospondin-related anonymous protein.